The sequence spans 344 residues: Follistatin (344 aa).

The signal sequence occupies residues 1-29 (MVCARHQPGGLCLLLLLLCQFMEDRSAQA). Residues 30–103 (GNCWLRQAKN…TCENVDCGPG (74 aa)) form the TB domain. 18 cysteine pairs are disulfide-bonded: C32–C55, C42–C88, C56–C91, C95–C106, C100–C116, C118–C150, C122–C143, C132–C164, C168–C179, C173–C189, C192–C225, C196–C218, C207–C239, C245–C256, C250–C267, C270–C302, C274–C295, and C284–C316. The 24-residue stretch at 94-117 (TCENVDCGPGKKCRMNKKNKPRCV) folds into the Follistatin-like 1 domain. One can recognise a Kazal-like 1 domain in the interval 112-166 (NKPRCVCAPDCSNITWKGPVCGLDGKTYRNECALLKARCKEQPELEVQYQGKCKK). N124 is a glycosylation site (N-linked (GlcNAc...) asparagine). The Follistatin-like 2 domain occupies 167 to 190 (TCRDVFCPGSSTCVVDQTNNAYCV). Residues 186–241 (NAYCVTCNRICPEPSSSEQSLCGNDGVTYSSACHLRKATCLLGRSIGLAYEGKCIK) enclose the Kazal-like 2 domain. Positions 244–268 (SCEDIQCGGGKKCLWDFKVGRGRCS) constitute a Follistatin-like 3 domain. The Kazal-like 3 domain maps to 264 to 318 (RGRCSLCDELCPDSKSDEPVCASDNATYASECAMKEAACSSGVLLEVKHSGSCNS). N-linked (GlcNAc...) asparagine glycosylation is present at N288. Residues 315–344 (SCNSISEETEEEEEEEDQDYSFPISSTLEW) are disordered. Over residues 321–333 (EETEEEEEEEDQD) the composition is skewed to acidic residues.

As to quaternary structure, interacts with GDF11. Interacts with activin A/INHBA. Interacts with myostatin/MSTN.

It is found in the secreted. It localises to the nucleus. The protein localises to the nucleolus. In terms of biological role, multifunctional regulatory protein whose primary function is to antagonize members of the transforming growth factor beta (TGF-beta) superfamily including activin, myostatin, GDF11 or bone morphogenetic proteins (BMPs). Mechanistically, binds to these ligands in the extracellular space, blocking their type II receptor-binding site to inhibit downstream signaling. Plays an essential role in muscle fiber formation and growth both by preventing the repressive effects of myostatin and through SMAD3/AKT/mTOR signaling independently of myostatin. Also promotes neural differentiation by antagonizing the action BMP4. Acts as a specific inhibitor of the biosynthesis and secretion of pituitary follicle stimulating hormone (FSH) by sequestering activin A/INHBA. On the other hand, translocates into the nucleus where it down-regulates rRNA synthesis and ribosome biogenesis to maintain cellular energy homeostasis by binding to rDNA. This is Follistatin from Rattus norvegicus (Rat).